The chain runs to 124 residues: Putative outer membrane protein CT_569 (124 aa).

The N-terminal stretch at 1–31 is a signal peptide; that stretch reads MKKTKKRKQSITLVEMMVVITLIGIIGGALA.

Its subcellular location is the cell outer membrane. This is Putative outer membrane protein CT_569 from Chlamydia trachomatis serovar D (strain ATCC VR-885 / DSM 19411 / UW-3/Cx).